The primary structure comprises 505 residues: MASIDFRNKINWHRRYRSPQGVKTEHEILRIFESDRGRIINSPAIRRLQQKTQVFPLERNAAVRTRLTHSMEVQQVGRYIAKEILSRLKEQDRLEEYGLDALTGPFESIVEMACLMHDIGNPPFGHFGEAAINDWFRQRLHPEDAESQPLTHDRCVVSSLRLQEGEENLNDIRRKVRQDICHFEGNAQGIRLVHTLMRMNLTWAQVGGILKYTRPAWWRGPVPDSHRYLMKKPGYYLSEEKYIARLRKELQLAPYSRFPLTWIMEAADDISYCVADLEDAVEKRIFSVEQLYHHLYHAWCHHEKDSLFELVVGNAWEKSRANTLSRSTEDQFFMYLRVNTLNKLVPYAAQRFIDNLPQIFAGTFNQALLEDASGFSRLLELYKNVAVEHVFSHPDVEQLELQGYRVISGLLDIYQPLLSLSLNDFRELVEKERLKRFPIESRLFQKLSTRHRLAYVEVVSKLPTDSAEYPVLEYYYRCRLIQDYISGMTDLYAWDEYRRLMAVEQ.

The HD domain occupies 66–273; sequence RLTHSMEVQQ…MEAADDISYC (208 aa).

It belongs to the dGTPase family. Type 1 subfamily. As to quaternary structure, homotetramer. Requires Mg(2+) as cofactor.

The catalysed reaction is dGTP + H2O = 2'-deoxyguanosine + triphosphate + H(+). Functionally, dGTPase preferentially hydrolyzes dGTP over the other canonical NTPs. This is Deoxyguanosinetriphosphate triphosphohydrolase from Salmonella typhimurium (strain LT2 / SGSC1412 / ATCC 700720).